The following is a 619-amino-acid chain: 4-hydroxyphenylalkanoate adenylyltransferase (619 aa).

It belongs to the ATP-dependent AMP-binding enzyme family.

The enzyme catalyses 17-(4-hydroxyphenyl)heptadecanoate + holo-[(phenol)carboxyphthiodiolenone synthase] + ATP = 17-(4-hydroxyphenyl)heptadecanoyl-[(phenol)carboxyphthiodiolenone synthase] + AMP + diphosphate. It catalyses the reaction 19-(4-hydroxyphenyl)nonadecanoate + holo-[(phenol)carboxyphthiodiolenone synthase] + ATP = 19-(4-hydroxyphenyl)nonadecanoyl-[(phenol)carboxyphthiodiolenone synthase] + AMP + diphosphate. It participates in lipid metabolism; fatty acid biosynthesis. In terms of biological role, catalyzes the activation of long-chain fatty acids as acyl-adenylates (acyl-AMP), which are then transferred to the multifunctional polyketide synthase PpsA for further chain extension. Involved in the biosynthesis of phenolphthiocerol, which is an important intermediate in the biosynthesis of phenolic glycolipid (PGL), also called mycosid B. The protein is 4-hydroxyphenylalkanoate adenylyltransferase (fadD29) of Mycobacterium bovis (strain ATCC BAA-935 / AF2122/97).